The chain runs to 637 residues: uncharacterized protein (637 aa).

Positions 7 to 34 form a DNA-binding region, zn(2)-C6 fungal-type; that stretch reads CDLCRLKKIKCSRGQPRCQTCTLFQADC. The segment at 304 to 327 adopts a C2H2-type; degenerate zinc-finger fold; that stretch reads SLCRTLCGQACLMAQQLNLHRKQS.

The protein localises to the nucleus. This is an uncharacterized protein from Schizosaccharomyces pombe (strain 972 / ATCC 24843) (Fission yeast).